Consider the following 345-residue polypeptide: Anthranilate phosphoribosyltransferase (345 aa).

5-phospho-alpha-D-ribose 1-diphosphate is bound by residues glycine 86, 89 to 90, threonine 94, 96 to 99, 114 to 122, and serine 126; these read GD, NIST, and KHGGRGVSS. Glycine 86 contributes to the anthranilate binding site. Serine 98 is a Mg(2+) binding site. Arginine 172 contacts anthranilate. Aspartate 231 and glutamate 232 together coordinate Mg(2+).

Belongs to the anthranilate phosphoribosyltransferase family. In terms of assembly, homodimer. Mg(2+) serves as cofactor.

It carries out the reaction N-(5-phospho-beta-D-ribosyl)anthranilate + diphosphate = 5-phospho-alpha-D-ribose 1-diphosphate + anthranilate. The protein operates within amino-acid biosynthesis; L-tryptophan biosynthesis; L-tryptophan from chorismate: step 2/5. Catalyzes the transfer of the phosphoribosyl group of 5-phosphorylribose-1-pyrophosphate (PRPP) to anthranilate to yield N-(5'-phosphoribosyl)-anthranilate (PRA). This is Anthranilate phosphoribosyltransferase from Ralstonia pickettii (strain 12J).